A 120-amino-acid polypeptide reads, in one-letter code: Protein CcdB (120 aa).

Residues 3 to 118 form the Response regulatory domain; sequence RVLVVDDAKF…KVLEAVSRVM (116 aa). At Asp53 the chain carries 4-aspartylphosphate.

The chain is Protein CcdB (ccdB) from Bacillus subtilis (strain 168).